Reading from the N-terminus, the 196-residue chain is NAD(P)H-quinone oxidoreductase subunit I (196 aa).

2 consecutive 4Fe-4S ferredoxin-type domains span residues 55-84 (GRIHFEFDKCIACEVCVRVCPINLPVVDWE) and 95-124 (KHYSIDFGVCIFCGNCVEYCPTNCLSMTEE). 8 residues coordinate [4Fe-4S] cluster: C64, C67, C70, C74, C104, C107, C110, and C114. A disordered region spans residues 170 to 196 (SPHDLPEGSQRSGKRPEEIIEEAEASS).

Belongs to the complex I 23 kDa subunit family. NDH-1 is composed of at least 11 different subunits. Requires [4Fe-4S] cluster as cofactor.

It is found in the cellular thylakoid membrane. It catalyses the reaction a plastoquinone + NADH + (n+1) H(+)(in) = a plastoquinol + NAD(+) + n H(+)(out). The catalysed reaction is a plastoquinone + NADPH + (n+1) H(+)(in) = a plastoquinol + NADP(+) + n H(+)(out). In terms of biological role, NDH-1 shuttles electrons from an unknown electron donor, via FMN and iron-sulfur (Fe-S) centers, to quinones in the respiratory and/or the photosynthetic chain. The immediate electron acceptor for the enzyme in this species is believed to be plastoquinone. Couples the redox reaction to proton translocation, and thus conserves the redox energy in a proton gradient. The polypeptide is NAD(P)H-quinone oxidoreductase subunit I (Crocosphaera subtropica (strain ATCC 51142 / BH68) (Cyanothece sp. (strain ATCC 51142))).